The following is an 839-amino-acid chain: Genome polyprotein (839 aa).

Residues 55-66 (TAEVGSHQSEPL) are compositionally biased toward polar residues. Positions 55-76 (TAEVGSHQSEPLKTSVDKPGSK) are disordered. 2 short sequence motifs ((L)YPX(n)L motif) span residues 167–171 (YPHGL) and 200–205 (YPVWEL). Residues 496 to 510 (SGGFSTTVSTEQNVP) show a composition bias toward polar residues. Disordered regions lie at residues 496–530 (SGGFSTTVSTEQNVPDPQVGITTPKDLKGKANKGK) and 773–792 (GDLESSVDDPRTDEDRRFES). The interval 766–836 (MLDRIAGGDL…RKLKGLFSQS (71 aa)) is involved in P1-2A pentamerization. Positions 780–792 (DDPRTDEDRRFES) are enriched in basic and acidic residues.

The protein belongs to the picornaviridae polyprotein family. Homodimer. Homomultimer; probably interacts with membranes in a multimeric form. Seems to assemble into amyloid-like fibers. As to quaternary structure, homopentamer. Homooligomer. In terms of assembly, interacts with capsid protein VP2. Interacts with capsid protein VP3. Interacts with capsid protein VP1. Interacts with capsid protein VP3. As to quaternary structure, interacts with capsid protein VP1. Interacts with capsid protein VP2. Specific enzymatic cleavages by viral protease in vivo yield a variety of precursors and mature proteins. Polyprotein processing intermediates are produced, such as P1-2A which is a functional precursor of the structural proteins, VP0 which is a VP4-VP2 precursor, VP1-2A precursor, 3ABC precursor which is a stable and catalytically active precursor of 3A, 3B and 3C proteins, 3AB and 3CD precursors. The assembly signal 2A is removed from VP1-2A by a host protease, possibly host Cathepsin L. This cleavage occurs over a region of 3 amino-acids probably generating VP1 proteins with heterogeneous C-termini. In terms of processing, during virion maturation, immature virions are rendered infectious following cleavage of VP0 into VP4 and VP2. This maturation seems to be an autocatalytic event triggered by the presence of RNA in the capsid and is followed by a conformational change of the particle. Post-translationally, the assembly signal 2A is removed from VP1-2A by a host protease, possibly host Cathepsin L in naked virions. This cleavage does not occur in enveloped virions. This cleavage occurs over a region of 3 amino-acids probably generating VP1 proteins with heterogeneous C-termini. Unlike other picornaviruses, does not seem to be myristoylated.

It localises to the virion. The protein resides in the host endosome. It is found in the host multivesicular body. Its subcellular location is the host membrane. In terms of biological role, capsid proteins VP1, VP2, and VP3 form a closed capsid enclosing the viral positive strand RNA genome. All these proteins contain a beta-sheet structure called beta-barrel jelly roll. Together they form an icosahedral capsid (T=3) composed of 60 copies of each VP1, VP2, and VP3, with a diameter of approximately 300 Angstroms. VP1 is situated at the 12 fivefold axes, whereas VP2 and VP3 are located at the quasi-sixfold axes. The naked capsid interacts with the host receptor HAVCR1 to provide virion attachment to and probably entry into the target cell. Functionally, VP0 precursor is a component of the immature procapsids. Its function is as follows. Plays a role in the assembly of the 12 pentamers into an icosahedral structure. Has not been detected in mature virions, supposedly owing to its small size. Precursor component of immature procapsids that corresponds to an extended form of the structural protein VP1. After maturation, possibly by the host Cathepsin L, the assembly signal 2A is cleaved to give rise to the mature VP1 protein. In terms of biological role, affects membrane integrity and causes an increase in membrane permeability. Functionally, functions as a viroporin. Affects membrane integrity and causes an increase in membrane permeability. Involved in host intracellular membrane rearrangements probably to give rise to the viral factories. Does not disrupt calcium homeostasis or glycoprotein trafficking. Antagonizes the innate immune response of the host by suppressing IFN-beta synthesis, which it achieves by interfering with the RIG-I/IFIH1 pathway. In Callithrix (Owl-faced monkey), this protein is Genome polyprotein.